The primary structure comprises 85 residues: Small ribosomal subunit protein bS20 (85 aa).

The protein belongs to the bacterial ribosomal protein bS20 family.

In terms of biological role, binds directly to 16S ribosomal RNA. The sequence is that of Small ribosomal subunit protein bS20 from Lactobacillus johnsonii (strain CNCM I-12250 / La1 / NCC 533).